We begin with the raw amino-acid sequence, 348 residues long: Protein RecA (348 aa).

Position 64 to 71 (64 to 71) interacts with ATP; sequence GPESSGKT. Positions 325 to 335 are enriched in basic and acidic residues; sequence YEIDGASKEPL. A disordered region spans residues 325 to 348; that stretch reads YEIDGASKEPLEETEETLSLLDDE. Residues 336 to 348 are compositionally biased toward acidic residues; it reads EETEETLSLLDDE.

This sequence belongs to the RecA family.

It is found in the cytoplasm. In terms of biological role, can catalyze the hydrolysis of ATP in the presence of single-stranded DNA, the ATP-dependent uptake of single-stranded DNA by duplex DNA, and the ATP-dependent hybridization of homologous single-stranded DNAs. It interacts with LexA causing its activation and leading to its autocatalytic cleavage. The chain is Protein RecA from Listeria seeligeri.